A 232-amino-acid chain; its full sequence is RNA chaperone ProQ (232 aa).

Residues 105 to 182 form a disordered region; that stretch reads EAKARVQAQR…REEQHTPVSD (78 aa). The span at 117–136 shows a compositional bias: basic and acidic residues; it reads QQAKKREAAAAAGEKEDAPR. The segment covering 137–146 has biased composition (basic residues); it reads RERKPRPTTP. Over residues 147-177 the composition is skewed to basic and acidic residues; the sequence is RRKEGAERKPRAQKPVEKAPKTVKAPREEQH.

Belongs to the ProQ family.

It is found in the cytoplasm. RNA chaperone with significant RNA binding, RNA strand exchange and RNA duplexing activities. May regulate ProP activity through an RNA-based, post-transcriptional mechanism. This chain is RNA chaperone ProQ, found in Escherichia coli (strain ATCC 8739 / DSM 1576 / NBRC 3972 / NCIMB 8545 / WDCM 00012 / Crooks).